The primary structure comprises 501 residues: G protein-activated inward rectifier potassium channel 1 (501 aa).

Positions 1-40 (MSALRRKFGDDYQVVTTSSSGSGLQPQGPGQGPQQQLVPK) are disordered. Topologically, residues 1–80 (MSALRRKFGD…LFTTLVDLKW (80 aa)) are cytoplasmic. Over residues 18–37 (SSSGSGLQPQGPGQGPQQQL) the composition is skewed to low complexity. The helical transmembrane segment at 81–105 (RWNLFIFILTYTVAWLFMASMWWVI) threads the bilayer. The Extracellular portion of the chain corresponds to 106–129 (AYTRGDLNKAHVGNYTPCVANVYN). N-linked (GlcNAc...) asparagine glycosylation is present at asparagine 119. The segment at residues 130 to 141 (FPSAFLFFIETE) is an intramembrane region (helical; Pore-forming). The pore-forming intramembrane region spans 142–148 (ATIGYGY). The Selectivity filter signature appears at 143 to 148 (TIGYGY). The Extracellular portion of the chain corresponds to 149–157 (RYITDKCPE). The helical transmembrane segment at 158–179 (GIILFLFQSILGSIVDAFLIGC) threads the bilayer. At 180–501 (MFIKMSQPKK…LRKMNSDRFT (322 aa)) the chain is on the cytoplasmic side. The interval 182–209 (IKMSQPKKRAETLMFSEHAVISMRDGKL) is polyphosphoinositide (PIP2)-binding. Residues serine 385 and serine 424 each carry the phosphoserine modification.

This sequence belongs to the inward rectifier-type potassium channel (TC 1.A.2.1) family. KCNJ3 subfamily. In terms of assembly, associates with KCNJ5/GIRK4 or KCNJ6/GIRK2 or KCNJ9/GIRK3 to form a G-protein activated heteromultimer pore-forming unit. The resulting inward current is much larger.

The protein localises to the membrane. It catalyses the reaction K(+)(in) = K(+)(out). Heteromultimer composed of KCNJ3/GIRK1 and KCNJ5/GIRK4 is activated by phosphatidylinositol 4,5 biphosphate (PtdIns(4,5)P2). Functionally, inward rectifier potassium channels are characterized by a greater tendency to allow potassium to flow into the cell rather than out of it. Their voltage dependence is regulated by the concentration of extracellular potassium; as external potassium is raised, the voltage range of the channel opening shifts to more positive voltages. The inward rectification is mainly due to the blockage of outward current by internal magnesium. This potassium channel is controlled by G proteins. This receptor plays a crucial role in regulating the heartbeat. In Bos taurus (Bovine), this protein is G protein-activated inward rectifier potassium channel 1 (KCNJ3).